A 1468-amino-acid chain; its full sequence is Neuropathy target esterase sws (1468 aa).

Residues 1-34 are Lumenal-facing; the sequence is MDVLEMLRASASGSYNTIFSDAWCQYVSKQITAT. A helical membrane pass occupies residues 35–55; sequence VYMYCALVMMSLLFIAWFLYF. At 56 to 1468 the chain is on the cytoplasmic side; that stretch reads KRMARLRLRD…RSSPNNETKN (1413 aa). Residue 174-301 participates in a nucleoside 3',5'-cyclic phosphate binding; that stretch reads IFGHFEKPVF…IRVIQVIMIR (128 aa). 2 stretches are compositionally biased toward polar residues: residues 332 to 348 and 357 to 366; these read TMSG…SRQA and NQLNLMQSAA. Residues 332-411 form a disordered region; it reads TMSGPINSQT…DGSFHGTTNL (80 aa). A phosphoserine mark is found at Ser-442 and Ser-451. Residues 480–607 and 596–723 contribute to the a nucleoside 3',5'-cyclic phosphate site; these read ELGL…VVRR and IVLD…LSHR. The region spanning 950–1116 is the PNPLA domain; the sequence is LVLGGGGARG…VNNLPGHLWR (167 aa). Residues 954–959 carry the GXGXXG motif; it reads GGGARG. The short motif at 981–985 is the GXSXG element; it reads GVSIG. The active-site Nucleophile is Ser-983. Residue Asp-1103 is the Proton acceptor of the active site. Positions 1103–1105 match the DGA/G motif; that stretch reads DGG. Residue Ser-1197 is modified to Phosphoserine. Residues 1368–1468 are disordered; sequence ERKMDKSTQS…RSSPNNETKN (101 aa). Residues 1374 to 1383 are compositionally biased toward low complexity; the sequence is STQSSPPTSS. Residues 1385 to 1395 show a composition bias toward basic and acidic residues; sequence TDMRGKEEAKH. The span at 1419-1441 shows a compositional bias: low complexity; the sequence is TQTGQEQELQQQQKLQQLQQDQG. Over residues 1446–1459 the composition is skewed to basic and acidic residues; it reads QLVDKDKEEDKENR.

It belongs to the NTE family. In terms of assembly, interacts with Pka-C3; interaction inhibits the catalytic function of Pka-C3 and the esterase activity of sws.

It localises to the endoplasmic reticulum membrane. It carries out the reaction a 1-acyl-sn-glycero-3-phosphocholine + H2O = sn-glycerol 3-phosphocholine + a fatty acid + H(+). Its function is as follows. Phospholipase B that deacylates intracellular phosphatidylcholine (PtdCho), generating glycerophosphocholine (GroPtdCho). This deacylation occurs at both sn-2 and sn-1 positions of PtdCho. Its specific chemical modification by certain organophosphorus (OP) compounds leads to distal axonopathy. Plays a role in the signaling mechanism between neurons and glia that regulates glia wrapping during development of the adult brain. Essential for membrane lipid homeostasis and cell survival in both neurons and glia of the adult brain. The chain is Neuropathy target esterase sws from Drosophila sechellia (Fruit fly).